A 283-amino-acid polypeptide reads, in one-letter code: RNase adapter protein RapZ (283 aa).

8–15 (GRSGSGKS) contacts ATP. 56-59 (DVRN) provides a ligand contact to GTP. The segment at 266 to 283 (RARGKNVQSRHRTLEKRK) is RNA-binding.

The protein belongs to the RapZ-like family. RapZ subfamily. As to quaternary structure, homotrimer.

Modulates the synthesis of GlmS, by affecting the processing and stability of the regulatory small RNA GlmZ. When glucosamine-6-phosphate (GlcN6P) concentrations are high in the cell, RapZ binds GlmZ and targets it to cleavage by RNase E. Consequently, GlmZ is inactivated and unable to activate GlmS synthesis. Under low GlcN6P concentrations, RapZ is sequestered and inactivated by an other regulatory small RNA, GlmY, preventing GlmZ degradation and leading to synthesis of GlmS. This is RNase adapter protein RapZ from Yersinia enterocolitica serotype O:8 / biotype 1B (strain NCTC 13174 / 8081).